Reading from the N-terminus, the 592-residue chain is 2-succinyl-5-enolpyruvyl-6-hydroxy-3-cyclohexene-1-carboxylate synthase (592 aa).

This sequence belongs to the TPP enzyme family. MenD subfamily. As to quaternary structure, homodimer. The cofactor is Mg(2+). Mn(2+) is required as a cofactor. It depends on thiamine diphosphate as a cofactor.

It catalyses the reaction isochorismate + 2-oxoglutarate + H(+) = 5-enolpyruvoyl-6-hydroxy-2-succinyl-cyclohex-3-ene-1-carboxylate + CO2. The protein operates within quinol/quinone metabolism; 1,4-dihydroxy-2-naphthoate biosynthesis; 1,4-dihydroxy-2-naphthoate from chorismate: step 2/7. It participates in quinol/quinone metabolism; menaquinone biosynthesis. In terms of biological role, catalyzes the thiamine diphosphate-dependent decarboxylation of 2-oxoglutarate and the subsequent addition of the resulting succinic semialdehyde-thiamine pyrophosphate anion to isochorismate to yield 2-succinyl-5-enolpyruvyl-6-hydroxy-3-cyclohexene-1-carboxylate (SEPHCHC). The chain is 2-succinyl-5-enolpyruvyl-6-hydroxy-3-cyclohexene-1-carboxylate synthase from Haloarcula marismortui (strain ATCC 43049 / DSM 3752 / JCM 8966 / VKM B-1809) (Halobacterium marismortui).